The following is a 690-amino-acid chain: Elongation factor G (690 aa).

One can recognise a tr-type G domain in the interval 8–283 (EDYRNFGIMA…AVVDYLPSPV (276 aa)). GTP contacts are provided by residues 17-24 (AHIDAGKT), 81-85 (DTPGH), and 135-138 (NKMD).

It belongs to the TRAFAC class translation factor GTPase superfamily. Classic translation factor GTPase family. EF-G/EF-2 subfamily.

The protein localises to the cytoplasm. Functionally, catalyzes the GTP-dependent ribosomal translocation step during translation elongation. During this step, the ribosome changes from the pre-translocational (PRE) to the post-translocational (POST) state as the newly formed A-site-bound peptidyl-tRNA and P-site-bound deacylated tRNA move to the P and E sites, respectively. Catalyzes the coordinated movement of the two tRNA molecules, the mRNA and conformational changes in the ribosome. This is Elongation factor G from Rhodopseudomonas palustris (strain BisA53).